The chain runs to 424 residues: CinA-like protein (424 aa).

This sequence belongs to the CinA family.

This Shewanella sediminis (strain HAW-EB3) protein is CinA-like protein.